The chain runs to 423 residues: Putative competence-damage inducible protein (423 aa).

Belongs to the CinA family.

In Streptococcus pyogenes serotype M4 (strain MGAS10750), this protein is Putative competence-damage inducible protein.